The following is a 427-amino-acid chain: Enolase (427 aa).

Q163 is a binding site for (2R)-2-phosphoglycerate. The active-site Proton donor is E205. 3 residues coordinate Mg(2+): D242, E285, and D312. Positions 337, 366, 367, and 388 each coordinate (2R)-2-phosphoglycerate. K337 serves as the catalytic Proton acceptor.

Belongs to the enolase family. It depends on Mg(2+) as a cofactor.

It localises to the cytoplasm. The protein localises to the secreted. Its subcellular location is the cell surface. It catalyses the reaction (2R)-2-phosphoglycerate = phosphoenolpyruvate + H2O. It participates in carbohydrate degradation; glycolysis; pyruvate from D-glyceraldehyde 3-phosphate: step 4/5. Functionally, catalyzes the reversible conversion of 2-phosphoglycerate (2-PG) into phosphoenolpyruvate (PEP). It is essential for the degradation of carbohydrates via glycolysis. The chain is Enolase from Burkholderia thailandensis (strain ATCC 700388 / DSM 13276 / CCUG 48851 / CIP 106301 / E264).